The following is a 178-amino-acid chain: Cytochrome b6-f complex iron-sulfur subunit (178 aa).

Residues 20–42 form a helical membrane-spanning segment; the sequence is LLTFGSVTGVALGALYPVVNYFI. The region spanning 65-161 is the Rieske domain; the sequence is ATGWLSSHPE…VSVENDNVFV (97 aa). Residues Cys107, His109, Cys125, and His128 each contribute to the [2Fe-2S] cluster site. Cys112 and Cys127 are disulfide-bonded.

It belongs to the Rieske iron-sulfur protein family. In terms of assembly, the 4 large subunits of the cytochrome b6-f complex are cytochrome b6, subunit IV (17 kDa polypeptide, PetD), cytochrome f and the Rieske protein, while the 4 small subunits are PetG, PetL, PetM and PetN. The complex functions as a dimer. It depends on [2Fe-2S] cluster as a cofactor.

It is found in the cellular thylakoid membrane. The catalysed reaction is 2 oxidized [plastocyanin] + a plastoquinol + 2 H(+)(in) = 2 reduced [plastocyanin] + a plastoquinone + 4 H(+)(out). In terms of biological role, component of the cytochrome b6-f complex, which mediates electron transfer between photosystem II (PSII) and photosystem I (PSI), cyclic electron flow around PSI, and state transitions. This is Cytochrome b6-f complex iron-sulfur subunit from Parasynechococcus marenigrum (strain WH8102).